A 225-amino-acid polypeptide reads, in one-letter code: Ribose-5-phosphate isomerase A (225 aa).

Substrate contacts are provided by residues 26–29, 82–85, and 95–98; these read TGST, DGAD, and KGGG. Glu104 (proton acceptor) is an active-site residue. Lys122 contacts substrate.

Belongs to the ribose 5-phosphate isomerase family. In terms of assembly, homodimer.

It catalyses the reaction aldehydo-D-ribose 5-phosphate = D-ribulose 5-phosphate. It functions in the pathway carbohydrate degradation; pentose phosphate pathway; D-ribose 5-phosphate from D-ribulose 5-phosphate (non-oxidative stage): step 1/1. Functionally, catalyzes the reversible conversion of ribose-5-phosphate to ribulose 5-phosphate. The chain is Ribose-5-phosphate isomerase A from Streptococcus mutans serotype c (strain ATCC 700610 / UA159).